We begin with the raw amino-acid sequence, 484 residues long: NADH-quinone oxidoreductase subunit N (484 aa).

14 helical membrane passes run 11–31, 42–62, 79–98, 113–133, 134–154, 167–187, 211–231, 248–268, 279–299, 313–333, 335–355, 378–398, 408–428, and 457–477; these read SLWI…VLLI, VTYY…FNLI, MASV…MVYS, FVLV…YSLL, TLYL…AIAR, FVLG…IYGI, LIIN…LGAV, VTLF…VRIL, WSDL…VVAL, ISHV…GYGA, AFYM…IILL, FALM…LVGF, VVSA…VISA, and LVLS…DFWM.

It belongs to the complex I subunit 2 family. In terms of assembly, NDH-1 is composed of 14 different subunits. Subunits NuoA, H, J, K, L, M, N constitute the membrane sector of the complex.

It is found in the cell inner membrane. The catalysed reaction is a quinone + NADH + 5 H(+)(in) = a quinol + NAD(+) + 4 H(+)(out). Functionally, NDH-1 shuttles electrons from NADH, via FMN and iron-sulfur (Fe-S) centers, to quinones in the respiratory chain. The immediate electron acceptor for the enzyme in this species is believed to be ubiquinone. Couples the redox reaction to proton translocation (for every two electrons transferred, four hydrogen ions are translocated across the cytoplasmic membrane), and thus conserves the redox energy in a proton gradient. The polypeptide is NADH-quinone oxidoreductase subunit N (Ruthia magnifica subsp. Calyptogena magnifica).